The sequence spans 174 residues: Late lactation protein B (174 aa).

Residues 1-18 (MKVLFLTIALSLFSILQA) form the signal peptide. An intrachain disulfide couples Cys77 to Cys169.

This sequence belongs to the calycin superfamily. Lipocalin family. In terms of tissue distribution, mammary gland specific. Secreted in milk.

The protein resides in the secreted. In terms of biological role, probably serves a role in the transport of a small ligand released during the hydrolysis of milk fat. The sequence is that of Late lactation protein B (LLPB) from Notamacropus eugenii (Tammar wallaby).